Consider the following 170-residue polypeptide: Endoribonuclease YbeY (170 aa).

Zn(2+)-binding residues include H118, H122, and H128.

Belongs to the endoribonuclease YbeY family. It depends on Zn(2+) as a cofactor.

Its subcellular location is the cytoplasm. Single strand-specific metallo-endoribonuclease involved in late-stage 70S ribosome quality control and in maturation of the 3' terminus of the 16S rRNA. This Mycobacteroides abscessus (strain ATCC 19977 / DSM 44196 / CCUG 20993 / CIP 104536 / JCM 13569 / NCTC 13031 / TMC 1543 / L948) (Mycobacterium abscessus) protein is Endoribonuclease YbeY.